The primary structure comprises 421 residues: MSHSWDGLGEIASVAQLTGLDAVKLIGLIVKAANTAWMHKKNCRQFAQHLKLIGNLLEQLKISEMKKYPETREPLEGLEDALRRSYLLVNSCRDRSYLYLLAMGWNIVYQFRKHQDEIDRFLKIIPLITLVDNARIRERFEYIDRDQREYTLDEEDRHVQDVILKQESTREAASVLKKTLSCSYPNLRFCEALKTENEKLQIELQRSQEHYDVAQCEVIQRLIGVTQAAAAVEPDSEKELTKKASKKSERSSSMKTEYSYDEDSPKKSSTRAASRSTSNVSSGHDLLSRRASQAQHHEEWHTDLLACCSEPSLCFKTFFFPCGTLAKIATAASNRHISSAEACNELMAYSLILSCCCYTCCVRRKLRKTLNITGGFIDDFLSHVMCCCCALVQELREVEIRGAYGTEKTKISPPSSQFMEH.

Residues 188–218 are a coiled coil; sequence RFCEALKTENEKLQIELQRSQEHYDVAQCEV. A disordered region spans residues 233–288; the sequence is EPDSEKELTKKASKKSERSSSMKTEYSYDEDSPKKSSTRAASRSTSNVSSGHDLLS. The segment covering 235-252 has biased composition (basic and acidic residues); that stretch reads DSEKELTKKASKKSERSS. Residues 270–282 show a composition bias toward low complexity; that stretch reads TRAASRSTSNVSS. The chain crosses the membrane as a helical span at residues 346-362; the sequence is LMAYSLILSCCCYTCCV.

Expressed in roots, leaves, stems, flowers and siliques. Expressed in vascular tissues of cotyledons, leaves and primary root, in the promeristem and adjacent elongation zone of the primary root and in the shoot apical meristem. Detected in the stele and endodermis, but not in the cortex, epidermis or root cap, including the columella. Not expressed in root hairs or in mesophyll cells of leaves and cotyledons.

The protein localises to the cell membrane. Inhibited by GdCl(3), but not by verapamil. Its function is as follows. Calcium-permeable stretch-activated channel component. Involved in mechano-stimulated calcium uptake mechanism and in mechanosensing in the primary root. The protein is Protein MID1-COMPLEMENTING ACTIVITY 1 (MCA1) of Arabidopsis thaliana (Mouse-ear cress).